A 404-amino-acid polypeptide reads, in one-letter code: Glucosyl-3-phosphoglycerate synthase (404 aa).

Aspartate 146 is an a divalent metal cation binding site. Glycine 188–valine 190 is a (2R)-3-phosphoglycerate binding site. Histidine 270 lines the a divalent metal cation pocket.

Belongs to the glycosyltransferase 2 family. Mn(2+) serves as cofactor. The cofactor is Co(2+). Requires Mg(2+) as cofactor.

The enzyme catalyses an NDP-alpha-D-glucose + (2R)-3-phosphoglycerate = (2R)-2-O-(alpha-D-glucopyranosyl)-3-phospho-glycerate + a ribonucleoside 5'-diphosphate + H(+). Its function is as follows. Involved in the biosynthesis of 6-O-methylglucose lipopolysaccarides (MGLPs). Catalyzes the transfer of a glucose (Glc) moiety from uridine diphosphate (UDP-Glc) to the position 2 of 3-phospho-D-glycerate (3-PGA) to form glucosyl-3-phosphoglycerate (GPG). The polypeptide is Glucosyl-3-phosphoglycerate synthase (Methanococcoides burtonii (strain DSM 6242 / NBRC 107633 / OCM 468 / ACE-M)).